The chain runs to 201 residues: Cytochrome c biogenesis ATP-binding export protein CcmA (201 aa).

Residues 3–200 (LIAENLGGER…EGAELRMGVA (198 aa)) enclose the ABC transporter domain. ATP is bound at residue 35 to 42 (GPNGSGKS).

The protein belongs to the ABC transporter superfamily. CcmA exporter (TC 3.A.1.107) family. The complex is composed of two ATP-binding proteins (CcmA) and two transmembrane proteins (CcmB).

The protein resides in the cell inner membrane. It carries out the reaction heme b(in) + ATP + H2O = heme b(out) + ADP + phosphate + H(+). Functionally, part of the ABC transporter complex CcmAB involved in the biogenesis of c-type cytochromes; once thought to export heme, this seems not to be the case, but its exact role is uncertain. Responsible for energy coupling to the transport system. In Mesorhizobium japonicum (strain LMG 29417 / CECT 9101 / MAFF 303099) (Mesorhizobium loti (strain MAFF 303099)), this protein is Cytochrome c biogenesis ATP-binding export protein CcmA.